The primary structure comprises 215 residues: MIVDKDKLVKSIEEAIKNGKKRRFVETVEMAVNLRNVDMKKPENRIDTVVNLPHGLGKPRKIGVFAKGDTALKAKEAGADVVITPEEIDELAKDKRRAKKLANSIDFFIAEAPLMPEIGRKLGPVLGPRGKIPQPIPPLADPKPFIDRLRNSVKIRTRDKTTFHAPIGSENMDVEKIAENAMEILKVVENKYENPTQVVKSVYVKKTMGPAVRVV.

Belongs to the universal ribosomal protein uL1 family. In terms of assembly, part of the 50S ribosomal subunit.

Functionally, binds directly to 23S rRNA. Probably involved in E site tRNA release. In terms of biological role, protein L1 is also a translational repressor protein, it controls the translation of its operon by binding to its mRNA. The polypeptide is Large ribosomal subunit protein uL1 (Archaeoglobus fulgidus (strain ATCC 49558 / DSM 4304 / JCM 9628 / NBRC 100126 / VC-16)).